Here is a 62-residue protein sequence, read N- to C-terminus: Photosystem II reaction center protein Z (62 aa).

Transmembrane regions (helical) follow at residues 8 to 28 and 41 to 61; these read AVFA…VVFA and FSGT…NSLI.

It belongs to the PsbZ family. As to quaternary structure, PSII is composed of 1 copy each of membrane proteins PsbA, PsbB, PsbC, PsbD, PsbE, PsbF, PsbH, PsbI, PsbJ, PsbK, PsbL, PsbM, PsbT, PsbY, PsbZ, Psb30/Ycf12, at least 3 peripheral proteins of the oxygen-evolving complex and a large number of cofactors. It forms dimeric complexes.

The protein localises to the plastid. It localises to the chloroplast thylakoid membrane. In terms of biological role, may control the interaction of photosystem II (PSII) cores with the light-harvesting antenna, regulates electron flow through the 2 photosystem reaction centers. PSII is a light-driven water plastoquinone oxidoreductase, using light energy to abstract electrons from H(2)O, generating a proton gradient subsequently used for ATP formation. The sequence is that of Photosystem II reaction center protein Z from Arabidopsis thaliana (Mouse-ear cress).